Reading from the N-terminus, the 216-residue chain is MLSLTAHLVLISTIIVKCSAFSKKPSERAKPAAVKKAVEDKQPVKVTAFEQASLNEDKAEAMSNIEPSPKISNSTVPTAPTPKKEKKVVATTKKTERSVAQGPPLVSEHIKDEKKMPSVHKPIRKGSIYANELLTEKPLTDTEPELHPDNHVVKAKSPKPVARTPTARHRNALKPGKINDKSDDTLHDAPSIQKVGGPSYEDAASVNEKEKDVNPK.

The interval 55–216 is disordered; that stretch reads NEDKAEAMSN…NEKEKDVNPK (162 aa). Composition is skewed to basic and acidic residues over residues 134–152, 177–187, and 207–216; these read LTEK…DNHV, KINDKSDDTLH, and NEKEKDVNPK.

This is an uncharacterized protein from Caenorhabditis elegans.